The sequence spans 152 residues: Protein eva-1 homolog A (152 aa).

The necessary for the localization and biological activity stretch occupies residues 1 to 60; that stretch reads MRLPLSHSPEHVEMALLSNILAAYSFVSENPERAALYFVSGVCIGLVLTLAALVIRISCH. Residues 35-55 traverse the membrane as a helical segment; the sequence is ALYFVSGVCIGLVLTLAALVI. Positions 70-97 are disordered; sequence KFLQDRESSSDSSDSEDGSEDTVSDLSV. Residues 82–92 show a composition bias toward acidic residues; the sequence is SDSEDGSEDTV. Thr-106 carries the phosphothreonine modification. Position 114 is a phosphoserine; by FAM20C (Ser-114).

Belongs to the EVA1 family. Expressed in lung, kidney, liver, pancreas, placenta, but not in heart and skeletal muscle.

The protein resides in the endoplasmic reticulum membrane. It localises to the lysosome membrane. Its function is as follows. Acts as a regulator of programmed cell death, mediating both autophagy and apoptosis. In Homo sapiens (Human), this protein is Protein eva-1 homolog A (EVA1A).